The primary structure comprises 352 residues: Quinolinate synthase (352 aa).

2 residues coordinate iminosuccinate: H48 and S69. A [4Fe-4S] cluster-binding site is contributed by C114. Iminosuccinate-binding positions include 140-142 and S157; that span reads YAN. C201 contacts [4Fe-4S] cluster. Iminosuccinate contacts are provided by residues 227–229 and T244; that span reads HPE. Position 298 (C298) interacts with [4Fe-4S] cluster.

It belongs to the quinolinate synthase family. Type 1 subfamily. [4Fe-4S] cluster is required as a cofactor.

The protein resides in the cytoplasm. It catalyses the reaction iminosuccinate + dihydroxyacetone phosphate = quinolinate + phosphate + 2 H2O + H(+). It functions in the pathway cofactor biosynthesis; NAD(+) biosynthesis; quinolinate from iminoaspartate: step 1/1. Its function is as follows. Catalyzes the condensation of iminoaspartate with dihydroxyacetone phosphate to form quinolinate. The protein is Quinolinate synthase of Pseudomonas aeruginosa (strain UCBPP-PA14).